A 319-amino-acid chain; its full sequence is Malate dehydrogenase (319 aa).

NAD(+) is bound by residues 10 to 15 (GAGNIG) and Asp-34. Arg-83 and Arg-89 together coordinate substrate. NAD(+) is bound by residues Asn-96 and 119–121 (ITN). Substrate-binding residues include Asn-121 and Arg-152. The active-site Proton acceptor is His-176.

It belongs to the LDH/MDH superfamily. MDH type 3 family.

The enzyme catalyses (S)-malate + NAD(+) = oxaloacetate + NADH + H(+). Functionally, catalyzes the reversible oxidation of malate to oxaloacetate. The chain is Malate dehydrogenase from Francisella tularensis subsp. mediasiatica (strain FSC147).